Consider the following 353-residue polypeptide: Phospho-N-acetylmuramoyl-pentapeptide-transferase (353 aa).

Helical transmembrane passes span 16-36, 64-84, 88-108, 130-150, 160-180, 198-218, 228-248, 256-276, 281-301, and 330-350; these read YISV…MYLM, AGTP…ATVL, LNNF…LIGI, LIFQ…YGHS, FPLF…IVGS, SILA…AVFA, IAGE…AFLW, VFMG…LAIV, ILLL…ILQV, and KIIV…LLSL.

This sequence belongs to the glycosyltransferase 4 family. MraY subfamily. Requires Mg(2+) as cofactor.

Its subcellular location is the cell inner membrane. The enzyme catalyses UDP-N-acetyl-alpha-D-muramoyl-L-alanyl-gamma-D-glutamyl-meso-2,6-diaminopimeloyl-D-alanyl-D-alanine + di-trans,octa-cis-undecaprenyl phosphate = di-trans,octa-cis-undecaprenyl diphospho-N-acetyl-alpha-D-muramoyl-L-alanyl-D-glutamyl-meso-2,6-diaminopimeloyl-D-alanyl-D-alanine + UMP. Its pathway is cell wall biogenesis; peptidoglycan biosynthesis. Its function is as follows. Catalyzes the initial step of the lipid cycle reactions in the biosynthesis of the cell wall peptidoglycan: transfers peptidoglycan precursor phospho-MurNAc-pentapeptide from UDP-MurNAc-pentapeptide onto the lipid carrier undecaprenyl phosphate, yielding undecaprenyl-pyrophosphoryl-MurNAc-pentapeptide, known as lipid I. This Aliarcobacter butzleri (strain RM4018) (Arcobacter butzleri) protein is Phospho-N-acetylmuramoyl-pentapeptide-transferase.